The sequence spans 95 residues: FXYD domain-containing ion transport regulator 6 (95 aa).

An N-terminal signal peptide occupies residues 1–18; the sequence is MELVLVFLCSLLAPTVLA. Residues 19–35 lie on the Extracellular side of the membrane; the sequence is SAAEKEKEMDPFHYDYQ. Residues 36 to 58 traverse the membrane as a helical segment; the sequence is TLRIGGLVFAVVLFSVGILLILS. Residues 59 to 95 are Cytoplasmic-facing; that stretch reads RRCKCSFNQKPRAPGDEEAQVENLITANATEPQKAEN.

Belongs to the FXYD family. As to quaternary structure, regulatory subunit of the sodium/potassium-transporting ATPase which is composed of a catalytic alpha subunit, a non-catalytic beta subunit and an additional regulatory subunit. The regulatory subunit, a member of the FXYD protein family, modulates the enzymatic activity in a tissue- and isoform-specific way by changing affinities of the Na+/K+-ATPase toward Na(+), K(+) or ATP.

Its subcellular location is the cell membrane. Functionally, associates with and regulates the activity of the sodium/potassium-transporting ATPase (NKA) which catalyzes the hydrolysis of ATP coupled with the exchange of Na(+) and K(+) ions across the plasma membrane. Reduces the apparent affinity for intracellular Na(+) with no change in the apparent affinity for extracellular K(+). In addition to modulating NKA kinetics, may also function as a regulator of NKA localization to the plasma membrane. This Pongo abelii (Sumatran orangutan) protein is FXYD domain-containing ion transport regulator 6 (FXYD6).